The following is a 105-amino-acid chain: uncharacterized protein (105 aa).

This is an uncharacterized protein from Bacillus subtilis (strain 168).